Here is a 240-residue protein sequence, read N- to C-terminus: Probable transcriptional regulatory protein MXAN_7062 (240 aa).

This sequence belongs to the TACO1 family.

Its subcellular location is the cytoplasm. This Myxococcus xanthus (strain DK1622) protein is Probable transcriptional regulatory protein MXAN_7062.